Reading from the N-terminus, the 172-residue chain is Single-stranded DNA-binding protein 2 (172 aa).

The region spanning 6 to 111 is the SSB domain; that stretch reads VNKVILVGHI…VIVNVGGTMQ (106 aa). The DNA-binding element occupies 55–61; it reads WHRVVVF. The interval 113–172 is disordered; sequence LGRHNSQPQQEPQTPPTAAKGEGKAVKGAGNAAKGKNAAAPQQPPAQPDPAYDFDDDIPF. A compositionally biased stretch (low complexity) spans 119–153; it reads QPQQEPQTPPTAAKGEGKAVKGAGNAAKGKNAAAP. The Important for interaction with partner proteins signature appears at 167-172; sequence DDDIPF.

As to quaternary structure, homotetramer.

Functionally, plays an important role in DNA replication, recombination and repair. Binds to ssDNA and to an array of partner proteins to recruit them to their sites of action during DNA metabolism. The sequence is that of Single-stranded DNA-binding protein 2 (ssb2) from Salmonella typhimurium (strain LT2 / SGSC1412 / ATCC 700720).